Consider the following 606-residue polypeptide: Glutamine--fructose-6-phosphate aminotransferase [isomerizing] (606 aa).

Residue Cys-2 is the Nucleophile; for GATase activity of the active site. In terms of domain architecture, Glutamine amidotransferase type-2 spans 2–217; sequence CGIIGIVGKE…EGDYVALDHD (216 aa). 2 SIS domains span residues 280 to 421 and 454 to 596; these read VPGD…ARGT and IAAD…VDQP. Lys-601 functions as the For Fru-6P isomerization activity in the catalytic mechanism.

Homodimer.

The protein localises to the cytoplasm. The enzyme catalyses D-fructose 6-phosphate + L-glutamine = D-glucosamine 6-phosphate + L-glutamate. In terms of biological role, catalyzes the first step in hexosamine metabolism, converting fructose-6P into glucosamine-6P using glutamine as a nitrogen source. In Caulobacter vibrioides (strain ATCC 19089 / CIP 103742 / CB 15) (Caulobacter crescentus), this protein is Glutamine--fructose-6-phosphate aminotransferase [isomerizing].